The following is an 83-amino-acid chain: Small ribosomal subunit protein uS17 (83 aa).

Belongs to the universal ribosomal protein uS17 family. In terms of assembly, part of the 30S ribosomal subunit.

Functionally, one of the primary rRNA binding proteins, it binds specifically to the 5'-end of 16S ribosomal RNA. The polypeptide is Small ribosomal subunit protein uS17 (Francisella tularensis subsp. tularensis (strain FSC 198)).